Reading from the N-terminus, the 414-residue chain is Probable serine/threonine-protein kinase CHK1 homolog (414 aa).

The 252-residue stretch at 4–255 (YELQETLASG…VSTVMKDPWV (252 aa)) folds into the Protein kinase domain. Residues 10-18 (LASGSTSKV) and Lys32 contribute to the ATP site. Asp121 serves as the catalytic Proton acceptor. Positions 291-310 (PGEVHKTPRTRPVSSQPRRA) are disordered.

The protein belongs to the protein kinase superfamily. CAMK Ser/Thr protein kinase family. NIM1 subfamily.

The protein resides in the nucleus. It carries out the reaction L-seryl-[protein] + ATP = O-phospho-L-seryl-[protein] + ADP + H(+). It catalyses the reaction L-threonyl-[protein] + ATP = O-phospho-L-threonyl-[protein] + ADP + H(+). Functionally, serine/threonine-protein kinase which is required for checkpoint-mediated cell cycle arrest and activation of DNA repair in response to the presence of DNA damage or unreplicated DNA. May also negatively regulate cell cycle progression during unperturbed cell cycles. The protein is Probable serine/threonine-protein kinase CHK1 homolog (CHK1) of Encephalitozoon cuniculi (strain GB-M1) (Microsporidian parasite).